The chain runs to 252 residues: tRNA pseudouridine synthase A (252 aa).

D54 serves as the catalytic Nucleophile. Y113 serves as a coordination point for substrate.

Belongs to the tRNA pseudouridine synthase TruA family. Homodimer.

It catalyses the reaction uridine(38/39/40) in tRNA = pseudouridine(38/39/40) in tRNA. In terms of biological role, formation of pseudouridine at positions 38, 39 and 40 in the anticodon stem and loop of transfer RNAs. This chain is tRNA pseudouridine synthase A, found in Bacteroides fragilis (strain ATCC 25285 / DSM 2151 / CCUG 4856 / JCM 11019 / LMG 10263 / NCTC 9343 / Onslow / VPI 2553 / EN-2).